The following is a 355-amino-acid chain: Lipopolysaccharide heptosyltransferase 1 (355 aa).

ADP-L-glycero-beta-D-manno-heptose contacts are provided by Thr-186, Thr-187, Lys-191, Glu-221, Asp-260, Thr-261, Gly-262, and His-265.

The protein belongs to the glycosyltransferase 9 family.

Its subcellular location is the cell inner membrane. It catalyses the reaction an alpha-Kdo-(2-&gt;4)-alpha-Kdo-(2-&gt;6)-lipid A + ADP-L-glycero-beta-D-manno-heptose = an L-alpha-D-Hep-(1-&gt;5)-[alpha-Kdo-(2-&gt;4)]-alpha-Kdo-(2-&gt;6)-lipid A + ADP + H(+). It functions in the pathway bacterial outer membrane biogenesis; LPS core biosynthesis. Glycosyltransferase involved in the biosynthesis of the core oligosaccharide region of lipopolysaccharide (LPS). Catalyzes the addition of the first heptose unit to one 3-deoxy-D-manno-octulosonic acid (Kdo) residue of the Kdo2-lipid A module. The protein is Lipopolysaccharide heptosyltransferase 1 of Pseudomonas aeruginosa (strain ATCC 15692 / DSM 22644 / CIP 104116 / JCM 14847 / LMG 12228 / 1C / PRS 101 / PAO1).